A 431-amino-acid chain; its full sequence is MVSLEKNDRVMLARQLPLKSVALILAGGRGTRLKDLTNKRAKPAVHFGGKFRIIDFALSNCLNSGIRRIGVITQYQSHTLVQHIQRGWSLFSEEMNEFVDLLPAQQRMKGENWYRGTADAVTQNLDIIRRYKAEYVVILAGDHIYKQDYSRMLIDHVEKGARCTVACMPVPIKEATAFGVMAVDESDKIIDFVEKPANPPAMPGDASKALASMGIYVFDADYLYELLAADDKDDASSHDFGKDIIPKITREGMAYAHPFPLSCVQSDPQAEPYWRDVGTLEAYWKANLDLASVTPELDMYDQNWPIRTHMESLPPAKFVQDRSGSHGMTLNSLVSGGCIISGSVVVQSVLFPRVRINSFCNIDSAVLLPEVWVGRSCRLRRCVIDRACIIPEGMVIGENAEEDARRFYRSEEGIVLVTREMLRKLQVKQER.

K39 contacts beta-D-fructose 1,6-bisphosphate. Residues R40, H46, and R52 each contribute to the AMP site. Y114 serves as a coordination point for alpha-D-glucose 1-phosphate. Residue R130 participates in AMP binding. Alpha-D-glucose 1-phosphate contacts are provided by residues G179, 194–195 (EK), and S212. Residues E370 and R386 each contribute to the AMP site. Residues 419–423 (REMLR) and 429–431 (QER) each bind beta-D-fructose 1,6-bisphosphate.

The protein belongs to the bacterial/plant glucose-1-phosphate adenylyltransferase family. Homotetramer.

The enzyme catalyses alpha-D-glucose 1-phosphate + ATP + H(+) = ADP-alpha-D-glucose + diphosphate. Its pathway is glycan biosynthesis; glycogen biosynthesis. Allosterically activated by fructose-1,6-bisphosphate (F16BP) and inhibited by AMP. Involved in the biosynthesis of ADP-glucose, a building block required for the elongation reactions to produce glycogen. Catalyzes the reaction between ATP and alpha-D-glucose 1-phosphate (G1P) to produce pyrophosphate and ADP-Glc. In Salmonella paratyphi C (strain RKS4594), this protein is Glucose-1-phosphate adenylyltransferase.